We begin with the raw amino-acid sequence, 140 residues long: MRRRRGSDSAAYEARTRDIVVRVFPTYAAEESSPEQGLYLWSYTVEIENHGEETVTLIARRWTITDGFNRVNEVEGSGVVGEQPELKPREAFRYVSNCPLPTPSGAMRGSYQMVTDAGDLFDVAIPEFSLHLPGAAMKLN.

The ApaG domain occupies 13–137; it reads EARTRDIVVR…FSLHLPGAAM (125 aa).

The protein is Protein ApaG of Caulobacter vibrioides (strain ATCC 19089 / CIP 103742 / CB 15) (Caulobacter crescentus).